The primary structure comprises 232 residues: Putative N-acetylmannosamine-6-phosphate 2-epimerase (232 aa).

It belongs to the NanE family.

It carries out the reaction an N-acyl-D-glucosamine 6-phosphate = an N-acyl-D-mannosamine 6-phosphate. The protein operates within amino-sugar metabolism; N-acetylneuraminate degradation; D-fructose 6-phosphate from N-acetylneuraminate: step 3/5. Converts N-acetylmannosamine-6-phosphate (ManNAc-6-P) to N-acetylglucosamine-6-phosphate (GlcNAc-6-P). The polypeptide is Putative N-acetylmannosamine-6-phosphate 2-epimerase (Borrelia garinii subsp. bavariensis (strain ATCC BAA-2496 / DSM 23469 / PBi) (Borreliella bavariensis)).